Reading from the N-terminus, the 255-residue chain is 4-hydroxy-tetrahydrodipicolinate reductase (255 aa).

Residues 9–14 (GFKGKM), 89–91 (GTT), and 115–118 (APNF) each bind NAD(+). The active-site Proton donor/acceptor is His-145. His-146 lines the (S)-2,3,4,5-tetrahydrodipicolinate pocket. The active-site Proton donor is Lys-149. 155–156 (GT) serves as a coordination point for (S)-2,3,4,5-tetrahydrodipicolinate.

The protein belongs to the DapB family.

It is found in the cytoplasm. It carries out the reaction (S)-2,3,4,5-tetrahydrodipicolinate + NAD(+) + H2O = (2S,4S)-4-hydroxy-2,3,4,5-tetrahydrodipicolinate + NADH + H(+). The catalysed reaction is (S)-2,3,4,5-tetrahydrodipicolinate + NADP(+) + H2O = (2S,4S)-4-hydroxy-2,3,4,5-tetrahydrodipicolinate + NADPH + H(+). The protein operates within amino-acid biosynthesis; L-lysine biosynthesis via DAP pathway; (S)-tetrahydrodipicolinate from L-aspartate: step 4/4. Functionally, catalyzes the conversion of 4-hydroxy-tetrahydrodipicolinate (HTPA) to tetrahydrodipicolinate. The chain is 4-hydroxy-tetrahydrodipicolinate reductase from Streptococcus gordonii (strain Challis / ATCC 35105 / BCRC 15272 / CH1 / DL1 / V288).